The following is a 767-amino-acid chain: Start control protein cdc10 (767 aa).

Positions Phe-17 to Thr-44 are disordered. The segment covering Gln-29–Thr-44 has biased composition (polar residues). Residues Glu-66–Ser-173 form the HTH APSES-type domain. The H-T-H motif DNA-binding region spans Ile-98–Ile-119. The segment at Thr-189–Phe-230 is disordered. A compositionally biased stretch (polar residues) spans Phe-192–Gln-221. Ser-252 carries the phosphoserine modification. A Nuclear localization signal motif is present at residues Lys-261 to Arg-264. ANK repeat units follow at residues Leu-356 to Arg-385 and Asn-483 to Ile-512. The interval Val-542–Lys-562 is disordered.

DSC1 contains cdc10 and sct1/res1. Interacts with pol5.

The protein localises to the nucleus. In terms of biological role, major component of the cell cycle transcription factor complex MBF (MCB binding factor, also known as DSC1), that controls G1-S phase specific gene expression. Involved in the control of rRNA production, via interaction with pol5. May be involved in the transcriptional regulation of the cdc22 and cdt1 genes. In fission yeast, two genes, cdc10 and cdc2, are required for the cell cycle control called start, the point early in the G1 phase at which cells become committed to the mitotic cycle. The sequence is that of Start control protein cdc10 (cdc10) from Schizosaccharomyces pombe (strain 972 / ATCC 24843) (Fission yeast).